The primary structure comprises 1699 residues: Genome polyprotein (1699 aa).

The segment covering M1–D19 has biased composition (low complexity). A disordered region spans residues M1 to E78. The interaction with host MAP1LC3A/LC3 stretch occupies residues M1 to R116. The segment covering Q46–N74 has biased composition (pro residues). The tract at residues E117–Q330 is interaction with NTPase. Positions R233–Q330 are interaction with NS4. 2 host ER membrane association regions span residues K250–N281 and T292–Q330. The segment at G331–A509 is interaction with NS1-2, NS4 and homooligomerization. The 168-residue stretch at L465–Q632 folds into the SF3 helicase domain. G495–T502 is a binding site for ATP. The segment at A586–D691 is important for mitochondrion targeting. The functions as endoplasmic reticulum export signal stretch occupies residues Y764–G770. The tract at residues R801 to T850 is host membrane association. Positions Q843–S894 are disordered. Over residues T850–D861 the composition is skewed to basic and acidic residues. The span at G879–T890 shows a compositional bias: basic residues. Residues D899–E904 are acidic. An O-(5'-phospho-RNA)-tyrosine modification is found at Y902. The interaction with host EIF4G stretch occupies residues W992–E1008. The Peptidase C37 domain occupies A1009–E1189. Residues H1038, E1062, and C1147 each act as for 3CLpro activity in the active site. The 122-residue stretch at K1425 to K1546 folds into the RdRp catalytic domain. Positions 1429, 1431, 1533, and 1534 each coordinate Mg(2+).

In terms of assembly, homodimer. Homooligomer. Interacts with NTPase; this interaction increases the proapoptotic activity of the NTPase and is crucial for the formation of the viral replication complex. Interacts with NS4; this interaction is crucial for the formation of the viral replication complex. Interacts (via N-terminus) with host VAPA. Interacts with host MAP1LC3A/LC3; this interaction does not seem to be linked to host autophagy, but rather plays a role in the formation of viral factories. Homooligomer. Interacts with NS1-2; this interaction increases the proapoptotic activity of the NTPase and is crucial for the formation of the viral replication complex. Interacts with NS4; this interaction increases the proapoptotic activity of the NTPase. As to quaternary structure, homodimer. Monomer; in solution. In terms of assembly, interacts with NTPase; this interaction increases the proapoptotic activity of the NTPase. Interacts with NS1-2; this interaction is crucial for the formation of the viral replication complex. Monomer. Interacts with the RNA-directed RNA polymerase; this interaction induces the multimerization of the RdRp and enhances its activity. Interacts with host IEF4G1; this interaction plays a role in translation of viral proteins. As to quaternary structure, homohexamer; also forms fibrous hexameric oligomer. Interacts with the viral genome-linked protein; this interaction induces the multimerization of the RdRp and enhances its activity. Requires Mg(2+) as cofactor. It depends on Mn(2+) as a cofactor. Post-translationally, specific enzymatic cleavages in vivo yield mature proteins. 3CLpro is first autocatalytically cleaved, then processes the whole polyprotein. NS1/2-3 and NS3-4 sites are cleaved rapidly and NS4-5, NS5-6, and NS6-7 sites are processed subsequently and less efficiently. VPg is uridylylated by the polymerase and is covalently attached to the 5'-end of the polyadenylated genomic and subgenomic RNAs. This uridylylated form acts as a nucleotide-peptide primer for the polymerase. In terms of processing, cleaved by host CASP3/caspase 3 at 18-22 h.p.i. The cleavage allows NS1 secretion, which is essential for intestinal infection and resistance to IFN-lambda.

It is found in the host endoplasmic reticulum membrane. It localises to the secreted. Its subcellular location is the host mitochondrion. The protein localises to the host Golgi apparatus membrane. The protein resides in the host cytoplasm. It is found in the host perinuclear region. It catalyses the reaction a ribonucleoside 5'-triphosphate + H2O = a ribonucleoside 5'-diphosphate + phosphate + H(+). It carries out the reaction Endopeptidase with a preference for cleavage when the P1 position is occupied by Glu-|-Xaa and the P1' position is occupied by Gly-|-Yaa.. The catalysed reaction is RNA(n) + a ribonucleoside 5'-triphosphate = RNA(n+1) + diphosphate. Functionally, induces the proliferation of the host smooth ER membranes forming long tubular structures. These remodeled membranes probably form the viral factories that contain the replication complex. May play a role in viral replication by interacting with host VAPA, a vesicle-associated membrane protein that plays a role in SNARE-mediated vesicle fusion. This interaction may target replication complex to intracellular membranes. Displays NTPase activity, but no helicase activity. Displays RNA chaperone-like activity and destabilizes dsRNA. Induces the formation of convoluted membranes derived from the host ER. These remodeled membranes probably form the viral factories that contain the replication complex. Initiates host cell death by targeting the mitochondrial outer membrane, leading to the permeabilization of mitochondria, programmed host cell death and viral egress. Externalization of host cardiolipin seems to be involved in the process. Probably plays a role in preventing the assembly of host stress granules. Its function is as follows. Probable key protein responsible for the formation of membrane alterations by the virus. Induces the formation of convoluted membranes derived from the host ER. These remodeled membranes probably form the viral factories that contain the replication complex. May play a role in targeting replication complex to intracellular membranes. In terms of biological role, viral genome-linked protein is covalently linked to the 5'-end of the positive-strand, negative-strand genomic RNAs and subgenomic RNA. Acts as a genome-linked replication primer. May recruit ribosome to viral RNA thereby promoting viral proteins translation. Interacts with host translation initiation complex to allow the translation of viral proteins. Induces the formation of aggregates of RNA-directed RNA polymerase in the presence of RNA. Through its interaction with the viral RNA-directed RNA polymerase, plays a crucial role in enhancing the polymerase activity. Functionally, processes the polyprotein. 3CLpro-RdRp is first released by autocleavage, then all other proteins are cleaved. May cleave polyadenylate-binding protein thereby inhibiting cellular translation. Replicates genomic and antigenomic RNA by recognizing replications specific signals. Also transcribes a subgenomic mRNA by initiating RNA synthesis internally on antigenomic RNA. This sgRNA codes for structural proteins. Catalyzes the covalent attachment VPg with viral RNAs. This chain is Genome polyprotein, found in Lordsdale virus (strain GII/Human/United Kingdom/Lordsdale/1993) (Human enteric calicivirus).